The following is a 99-amino-acid chain: Integration host factor subunit alpha (99 aa).

Positions 49–75 (FGNFDLRDKNQRPGRNPKTGEDIPITA) are disordered.

Belongs to the bacterial histone-like protein family. As to quaternary structure, heterodimer of an alpha and a beta chain.

Its function is as follows. This protein is one of the two subunits of integration host factor, a specific DNA-binding protein that functions in genetic recombination as well as in transcriptional and translational control. This Klebsiella pneumoniae (strain 342) protein is Integration host factor subunit alpha.